A 426-amino-acid polypeptide reads, in one-letter code: Amino acid transporter AVT1H (426 aa).

Transmembrane regions (helical) follow at residues 34–54 (SFLHSVINMVGMLIGLGQLSM), 55–75 (PYAVESGGWMSIFLLISFGIL), 110–130 (LIVCLFIYLEIFMALVSYTIS), 148–168 (HFPAAKLTAVAVAIALPSLWI), 182–202 (ILMSAIIFGSVVYTAIFGGVI), 215–235 (IPTVSGIYLFSFGGHIVFPNL), 248–268 (VSIVSFATVTALYGALAITGA), 292–312 (IALWATVLTPMTKYALEFAPL), 340–360 (LLLVILALALTVPYFGYVLSL), 363–383 (SLVSVTIAVTLPSAFYLKICW), and 392–412 (AANLGFVVLGCVLGVLGSFES).

Belongs to the amino acid/polyamine transporter 2 family. Amino acid/auxin permease (AAAP) (TC 2.A.18.5) subfamily.

Its subcellular location is the membrane. This chain is Amino acid transporter AVT1H, found in Arabidopsis thaliana (Mouse-ear cress).